Consider the following 355-residue polypeptide: Uroporphyrinogen decarboxylase (355 aa).

Substrate-binding positions include 27–31 (RQAGR), D77, Y154, T209, and H328.

The protein belongs to the uroporphyrinogen decarboxylase family. In terms of assembly, homodimer.

Its subcellular location is the cytoplasm. The enzyme catalyses uroporphyrinogen III + 4 H(+) = coproporphyrinogen III + 4 CO2. It participates in porphyrin-containing compound metabolism; protoporphyrin-IX biosynthesis; coproporphyrinogen-III from 5-aminolevulinate: step 4/4. Catalyzes the decarboxylation of four acetate groups of uroporphyrinogen-III to yield coproporphyrinogen-III. In Aliivibrio fischeri (strain ATCC 700601 / ES114) (Vibrio fischeri), this protein is Uroporphyrinogen decarboxylase.